Reading from the N-terminus, the 119-residue chain is MDKIVLEGCRFYGYHGAFKEEQTLGQIFLVDLELSVDLQAASLSDQLTDTVHYGMVFDSVRQLVEGEKFILIERLAGAICEQLFNEFPPIEAIKVAIKKENPPIAGHYKAVGIELERQR.

Substrate is bound by residues E21, Y53, and 72-73; that span reads IE. The Proton donor/acceptor role is filled by K99.

It belongs to the DHNA family.

It carries out the reaction 7,8-dihydroneopterin = 6-hydroxymethyl-7,8-dihydropterin + glycolaldehyde. Its pathway is cofactor biosynthesis; tetrahydrofolate biosynthesis; 2-amino-4-hydroxy-6-hydroxymethyl-7,8-dihydropteridine diphosphate from 7,8-dihydroneopterin triphosphate: step 3/4. Its function is as follows. Catalyzes the conversion of 7,8-dihydroneopterin to 6-hydroxymethyl-7,8-dihydropterin. In Streptococcus pyogenes serotype M1, this protein is Dihydroneopterin aldolase (folB).